A 189-amino-acid chain; its full sequence is CDP-archaeol synthase (189 aa).

5 helical membrane-spanning segments follow: residues 6 to 26, 71 to 91, 96 to 116, 125 to 145, and 162 to 184; these read VAIAVWAMLPAYVPNNVAVLA, GVVLALLLNQLQPFVAGTVGV, IAAAVALAFGAMLGDILASFL, GAAFPGVDQLDFVIVSLALTA, and VAIFVLTPVLHVSTNGLAYAFGL.

The protein belongs to the CDP-archaeol synthase family. It depends on Mg(2+) as a cofactor.

It is found in the cell membrane. The enzyme catalyses 2,3-bis-O-(geranylgeranyl)-sn-glycerol 1-phosphate + CTP + H(+) = CDP-2,3-bis-O-(geranylgeranyl)-sn-glycerol + diphosphate. The protein operates within membrane lipid metabolism; glycerophospholipid metabolism. In terms of biological role, catalyzes the formation of CDP-2,3-bis-(O-geranylgeranyl)-sn-glycerol (CDP-archaeol) from 2,3-bis-(O-geranylgeranyl)-sn-glycerol 1-phosphate (DGGGP) and CTP. This reaction is the third ether-bond-formation step in the biosynthesis of archaeal membrane lipids. The polypeptide is CDP-archaeol synthase (Natronomonas pharaonis (strain ATCC 35678 / DSM 2160 / CIP 103997 / JCM 8858 / NBRC 14720 / NCIMB 2260 / Gabara) (Halobacterium pharaonis)).